We begin with the raw amino-acid sequence, 435 residues long: MTAPELRAPAGHPQEPPARSSPAQALSSYHHFPTSDQERWYQETGSLCSRFLEAGQYGLHQQYQFMFFFMHHLIPALGPYPQKWRSTISRSGLPIEFSLNFQKGSHRLLRIGFEPVNFLSGSSQDPFNRIPIADLLAQLARLQLRGFDTQCFQQLLTRFQLSLDEVRQLPPDDQPLKSQGAFGFDFNPDGAILVKGYVFPYLKAKAAGVPVATLIAESVRAIDADRNQFMHAFSLINDYMQESTGYNEYTFLSCDLVEMSRQRVKIYGAHTEVTWAKIAEMWTLGGRLIEEPEIMEGLARLKQIWSLLQIGEGSRAFKGGFDYGKASATDQIPSPIIWNYEISPGSSFPVPKFYLPVHGENDLRVARSLAQFWDSLGWSEHACAYPDMLQQLYPDLDVSRTSRLQSWISYSYTAKKGVYMSVYFHSQSTYLWEED.

The interval 1-28 (MTAPELRAPAGHPQEPPARSSPAQALSS) is disordered. Glu96 provides a ligand contact to brevianamide F. Positions 110, 195, 197, 265, 267, 354, 419, and 423 each coordinate dimethylallyl diphosphate.

Belongs to the tryptophan dimethylallyltransferase family. Monomer.

The enzyme catalyses brevianamide F + dimethylallyl diphosphate = deoxybrevianamide E + diphosphate. Its pathway is alkaloid biosynthesis. Deoxybrevianamide E synthase; part of the gene cluster that mediates the biosynthesis of notoamide, a fungal indole alkaloid that belongs to a family of natural products containing a characteristic bicyclo[2.2.2]diazaoctane core. The first step of notoamide biosynthesis involves coupling of L-proline and L-tryptophan by the bimodular NRPS notE', to produce cyclo-L-tryptophan-L-proline called brevianamide F. The reverse prenyltransferase notF' then acts as a deoxybrevianamide E synthase and converts brevianamide F to deoxybrevianamide E via reverse prenylation at C-2 of the indole ring leading to the bicyclo[2.2.2]diazaoctane core. Deoxybrevianamide E is further hydroxylated at C-6 of the indole ring, likely catalyzed by the cytochrome P450 monooxygenase notG', to yield 6-hydroxy-deoxybrevianamide E. 6-hydroxy-deoxybrevianamide E is a specific substrate of the prenyltransferase notC' for normal prenylation at C-7 to produce 6-hydroxy-7-prenyl-deoxybrevianamide, also called notoamide S. As the proposed pivotal branching point in notoamide biosynthesis, notoamide S can be diverted to notoamide E through an oxidative pyran ring closure putatively catalyzed by either notH' cytochrome P450 monooxygenase or the notD' FAD-linked oxidoreductase. This step would be followed by an indole 2,3-epoxidation-initiated pinacol-like rearrangement catalyzed by the notB' FAD-dependent monooxygenase leading to the formation of notoamide C and notoamide D. On the other hand notoamide S is converted to notoamide T by notH' (or notD'), a bifunctional oxidase that also functions as the intramolecular Diels-Alderase responsible for generation of (-)-notoamide T. To generate antipodal (+)-notoaminide T, notH (or notD) in Aspergillus strain MF297-2 is expected to catalyze a Diels-Alder reaction leading to the opposite stereochemistry. The remaining oxidoreductase notD' (or notH') likely catalyzes the oxidative pyran ring formation to yield (-)-stephacidin A. The FAD-dependent monooxygenase notI' is highly similar to notB' and is predicted to catalyze a similar conversion from (-)-stephacidin A to (+)-notoamide B via the 2,3-epoxidation of (-)-stephacidin A followed by a pinacol-type rearrangement. Finally, it remains unclear which enzyme could be responsible for the final hydroxylation steps leading to notoamide A and sclerotiamide. This chain is Deoxybrevianamide E synthase, found in Aspergillus versicolor.